A 453-amino-acid polypeptide reads, in one-letter code: uncharacterized protein (453 aa).

The Cytoplasmic portion of the chain corresponds to 1–110 (MIQTQSTAIK…KAILRTFNHP (110 aa)). Residues 111–131 (IALTELQFLVSAVLCVGFASI) form a helical membrane-spanning segment. Residues 132-172 (VNLFRLPRLKHTKFSKALNSFPDGILPEYLDGNFRSSILHK) are Lumenal-facing. A helical transmembrane segment spans residues 173 to 193 (FLVPSKLVLMTTFPMGIFQFI). Topologically, residues 194 to 201 (GHITSHKA) are cytoplasmic. A helical membrane pass occupies residues 202–222 (VSMIPVSLVHSVKALSPIITV). Residues 223-234 (GYYKFFEHRYYN) lie on the Lumenal side of the membrane. The chain crosses the membrane as a helical span at residues 235-255 (SMTYYTLLLLIFGVMTTCWST). The Cytoplasmic portion of the chain corresponds to 256–269 (HGSKRASDNKSGSS). The helical transmembrane segment at 270-290 (LIGLLFAFISMIIFVAQNIFA) threads the bilayer. The Lumenal portion of the chain corresponds to 291–332 (KNILTIRRKVGILPSSSTDDVTSKEGQPSLDKTRFSPLQVDK). Residues 333 to 353 (ITILFYCSCIGFSLTLLPFLT) traverse the membrane as a helical segment. Topologically, residues 354–371 (GELMHGGSVINDLTLETV) are cytoplasmic. The chain crosses the membrane as a helical span at residues 372–392 (ALVAIHGIAHFFQAMLAFQLI). The Lumenal portion of the chain corresponds to 393 to 413 (GLLSSINYSVANIMKRIVVIS). A helical transmembrane segment spans residues 414–434 (VALFWETKLNFFQVFGVILTI). At 435–453 (AGLYGYDKWGLSKKDGRQA) the chain is on the cytoplasmic side.

It belongs to the TPT transporter family.

Its subcellular location is the membrane. Functionally, able to suppress the functional loss of YPT1. May form a channel. Protein SLY41 is not essential for cell viability. The SLY41 gene is a multicopy suppressor. This is an uncharacterized protein from Saccharomyces cerevisiae (strain ATCC 204508 / S288c) (Baker's yeast).